The sequence spans 411 residues: Multidrug resistance protein MdtG (411 aa).

The next 11 membrane-spanning stretches (helical) occupy residues 17–37 (LFVA…VMPF), 59–79 (LVFS…GGLA), 92–112 (ALGM…WQFL), 116–136 (AVLG…ATQV), 147–167 (WLST…GLLA), 174–194 (PVFF…LFAV), 222–242 (VLTL…IAPI), 257–277 (LAFV…ISAP), 291–311 (ILVA…MVQN), 320–340 (FLLG…LIYN), and 379–399 (AVFV…WITL).

Belongs to the major facilitator superfamily. DHA1 family. MdtG (TC 2.A.1.2.20) subfamily.

It is found in the cell inner membrane. The chain is Multidrug resistance protein MdtG from Erwinia billingiae (strain Eb661).